Consider the following 462-residue polypeptide: Exodeoxyribonuclease 7 large subunit (462 aa).

This sequence belongs to the XseA family. In terms of assembly, heterooligomer composed of large and small subunits.

It is found in the cytoplasm. It carries out the reaction Exonucleolytic cleavage in either 5'- to 3'- or 3'- to 5'-direction to yield nucleoside 5'-phosphates.. Its function is as follows. Bidirectionally degrades single-stranded DNA into large acid-insoluble oligonucleotides, which are then degraded further into small acid-soluble oligonucleotides. The chain is Exodeoxyribonuclease 7 large subunit from Pectobacterium carotovorum subsp. carotovorum (strain PC1).